The chain runs to 189 residues: MAQNGSEGPLLAGVAGRYALALYELAHDQGQVDDVAKNLDAFDALYRESDDLRRLVRSPAYSAAEQTAAVGALLDRAGISGLAANFIKLTAANRRLFALPGMIRAYREKVRESKGIIRAEVRVAEKPSDAVIEDIKASLRDVAKSEIDLDLHIDPSLIGGIVVKMGSRMVDASLRTKLNSIRLAMREAR.

This sequence belongs to the ATPase delta chain family. As to quaternary structure, F-type ATPases have 2 components, F(1) - the catalytic core - and F(0) - the membrane proton channel. F(1) has five subunits: alpha(3), beta(3), gamma(1), delta(1), epsilon(1). F(0) has three main subunits: a(1), b(2) and c(10-14). The alpha and beta chains form an alternating ring which encloses part of the gamma chain. F(1) is attached to F(0) by a central stalk formed by the gamma and epsilon chains, while a peripheral stalk is formed by the delta and b chains.

It localises to the cell inner membrane. Functionally, f(1)F(0) ATP synthase produces ATP from ADP in the presence of a proton or sodium gradient. F-type ATPases consist of two structural domains, F(1) containing the extramembraneous catalytic core and F(0) containing the membrane proton channel, linked together by a central stalk and a peripheral stalk. During catalysis, ATP synthesis in the catalytic domain of F(1) is coupled via a rotary mechanism of the central stalk subunits to proton translocation. This protein is part of the stalk that links CF(0) to CF(1). It either transmits conformational changes from CF(0) to CF(1) or is implicated in proton conduction. This Methylorubrum extorquens (strain CM4 / NCIMB 13688) (Methylobacterium extorquens) protein is ATP synthase subunit delta.